A 387-amino-acid chain; its full sequence is Phosphoglycerate kinase (387 aa).

Substrate-binding positions include 21–23, Arg36, 59–62, Arg113, and Arg146; these read DLN and HLGR. ATP is bound by residues Lys197, Glu314, and 340 to 343; that span reads GGDT.

The protein belongs to the phosphoglycerate kinase family. Monomer.

It localises to the cytoplasm. The enzyme catalyses (2R)-3-phosphoglycerate + ATP = (2R)-3-phospho-glyceroyl phosphate + ADP. It functions in the pathway carbohydrate degradation; glycolysis; pyruvate from D-glyceraldehyde 3-phosphate: step 2/5. The polypeptide is Phosphoglycerate kinase (pgk) (Pasteurella multocida (strain Pm70)).